The sequence spans 1079 residues: Capping protein inhibiting regulator of actin dynamics (1079 aa).

Over residues 1–11 (MSQENVSDKVR) the composition is skewed to basic and acidic residues. Disordered stretches follow at residues 1–293 (MSQE…EEER), 308–327 (ERKR…AEKR), 341–383 (EHRI…EWKR), 420–453 (PVTP…PTLS), 493–522 (EGKK…VFES), 606–639 (IFGQ…VQSR), and 658–1054 (PSFL…TTQV). Over residues 36-45 (DEGSSDEEEV) the composition is skewed to acidic residues. Over residues 64–76 (SAKEKSVSHDTVQ) the composition is skewed to basic and acidic residues. Positions 115-134 (AKHKLSVKPKNQRVSRKHRR) are enriched in basic residues. The segment covering 140–158 (HEDDFSEIQEEFEKDEEVF) has biased composition (acidic residues). The span at 159–293 (DSSREDYGII…EERKRAEEER (135 aa)) shows a compositional bias: basic and acidic residues. Over residues 420–434 (PVTPATGQQGETTAE) the composition is skewed to polar residues. Residues 670–682 (PKSQRSESGSPIQ) show a composition bias toward polar residues. Residues 684–695 (ESEDSDTKDEDG) are compositionally biased toward acidic residues. Polar residues predominate over residues 756-781 (DNSTLSEKSSPISPQQENIEFQTTVA). Composition is skewed to basic and acidic residues over residues 896 to 930 (WREK…DKET) and 944 to 983 (GFRE…EDKG). The span at 984–993 (NGSSSIISKH) shows a compositional bias: polar residues. Basic and acidic residues predominate over residues 994-1016 (QTADENKRPDTLLARFERRDNLK). The span at 1020-1033 (TLPSSVTVEITDST) shows a compositional bias: polar residues.

Directly interacts with actin-capping proteins; this interaction decreases the binding of capping proteins to actin.

The protein resides in the cytoplasm. Its subcellular location is the cytosol. In terms of biological role, involved in epithelial cell integrity by acting on the maintenance of the actin cytoskeleton. Positively regulates the actin polymerization, by inhibiting the interaction of actin-capping proteins with actin. This Danio rerio (Zebrafish) protein is Capping protein inhibiting regulator of actin dynamics (crad).